The primary structure comprises 480 residues: Endothelial transcription factor GATA-2 (480 aa).

At S73 the chain carries Phosphoserine. R86 is modified (asymmetric dimethylarginine). Positions 166–208 are disordered; sequence SGSHLFGFPPTPPKEVSPDPSTTGAASPASSSAGGSVARGEDK. The span at 183 to 201 shows a compositional bias: low complexity; that stretch reads PDPSTTGAASPASSSAGGS. S192 carries the post-translational modification Phosphoserine. 2 consecutive GATA-type zinc fingers follow at residues 295 to 319 and 349 to 373; these read CVNCGATATPLWRRDGTGHYLCNAC and CANCQTTTTTLWRRNANGDPVCNAC. K389 is covalently cross-linked (Glycyl lysine isopeptide (Lys-Gly) (interchain with G-Cter in SUMO2)). The segment at 457 to 480 is disordered; it reads TPIHPSSSLSFGHPHPSSMVTAMG.

As to quaternary structure, interacts with BRD3. Interacts with AR and CCAR1. Interacts with MDFIC.

Its subcellular location is the nucleus. Functionally, transcriptional activator which regulates endothelin-1 gene expression in endothelial cells. Binds to the consensus sequence 5'-AGATAG-3'. In Mus musculus (Mouse), this protein is Endothelial transcription factor GATA-2 (Gata2).